A 777-amino-acid polypeptide reads, in one-letter code: Type IV pilus biogenesis and competence protein PilQ (777 aa).

Positions 1–24 (MNTKLTKIISGLFVATAAFQTASA) are cleaved as a signal peptide. Low complexity-rich tracts occupy residues 135–154 (ARPAVKAAPAAPAKQQAAAP) and 197–233 (ASAKQQAAAPAKQQAAAPAKQQAAAPAKQQAAAPAKQ). 2 disordered regions span residues 135–156 (ARPAVKAAPAAPAKQQAAAPST) and 197–236 (ASAKQQAAAPAKQQAAAPAKQQAAAPAKQQAAAPAKQTNI).

It belongs to the bacterial secretin family. PilQ subfamily. As to quaternary structure, homododecamer. Tetramer of trimer.

The protein resides in the cell outer membrane. Functionally, required for type IV pilus biogenesis and competence. Could function as a pore for exit of the pilus but also as a channel for entry of heme and antimicrobial agents and uptake of transforming DNA. The polypeptide is Type IV pilus biogenesis and competence protein PilQ (pilQ) (Neisseria meningitidis serogroup B / serotype 15 (strain H44/76)).